The sequence spans 132 residues: Small ribosomal subunit protein uS8c (132 aa).

Belongs to the universal ribosomal protein uS8 family. Part of the 30S ribosomal subunit.

Its subcellular location is the plastid. It localises to the chloroplast. Functionally, one of the primary rRNA binding proteins, it binds directly to 16S rRNA central domain where it helps coordinate assembly of the platform of the 30S subunit. This chain is Small ribosomal subunit protein uS8c (rps8), found in Drimys granadensis.